We begin with the raw amino-acid sequence, 645 residues long: Threonine--tRNA ligase (645 aa).

The TGS domain occupies 1 to 63 (MEQINIQFPD…ETDGSIEIVT (63 aa)). The tract at residues 242–540 (DHRKIGKELE…LTEETKGAFP (299 aa)) is catalytic. Zn(2+) contacts are provided by Cys-336, His-387, and His-517.

Belongs to the class-II aminoacyl-tRNA synthetase family. As to quaternary structure, homodimer. Zn(2+) is required as a cofactor.

It is found in the cytoplasm. The catalysed reaction is tRNA(Thr) + L-threonine + ATP = L-threonyl-tRNA(Thr) + AMP + diphosphate + H(+). Functionally, catalyzes the attachment of threonine to tRNA(Thr) in a two-step reaction: L-threonine is first activated by ATP to form Thr-AMP and then transferred to the acceptor end of tRNA(Thr). Also edits incorrectly charged L-seryl-tRNA(Thr). The protein is Threonine--tRNA ligase of Staphylococcus aureus (strain JH1).